The following is a 534-amino-acid chain: Dual specificity calcium/calmodulin-dependent 3',5'-cyclic nucleotide phosphodiesterase 1B (534 aa).

The interval 1-21 (MELSPRSPPEMLESDCPSPLE) is disordered. Ser7 and Ser14 each carry phosphoserine. 2 calmodulin-binding regions span residues 27-47 (SKKM…QLEN) and 116-139 (EKPK…MFRR). The region spanning 144–501 (VGPTYSTAVL…QKWKERAASG (358 aa)) is the PDEase domain. His221 functions as the Proton donor in the catalytic mechanism. Positions 225, 261, 262, and 368 each coordinate Zn(2+). Residue Asp262 participates in Mg(2+) binding. 2 disordered regions span residues 442-473 (VQPT…GDPN) and 494-534 (WKER…GNLD). Over residues 453–462 (KNQPSFQWRQ) the composition is skewed to polar residues. A phosphoserine mark is found at Ser464 and Ser512.

The protein belongs to the cyclic nucleotide phosphodiesterase family. PDE1 subfamily. In terms of assembly, homodimer. It depends on Zn(2+) as a cofactor. Requires Mg(2+) as cofactor. In terms of tissue distribution, expressed in central nervous system regions. Most abundant in basal ganglia. Also found in kidney papilla and adrenal medulla.

The protein resides in the cytoplasm. Its subcellular location is the cytosol. It carries out the reaction a nucleoside 3',5'-cyclic phosphate + H2O = a nucleoside 5'-phosphate + H(+). The enzyme catalyses 3',5'-cyclic GMP + H2O = GMP + H(+). The catalysed reaction is 3',5'-cyclic AMP + H2O = AMP + H(+). With respect to regulation, type I PDE are activated by the binding of calmodulin in the presence of Ca(2+). In terms of biological role, cyclic nucleotide phosphodiesterase with a dual specificity for the second messengers cAMP and cGMP, which are key regulators of many important physiological processes. Has a preference for cGMP as a substrate. The chain is Dual specificity calcium/calmodulin-dependent 3',5'-cyclic nucleotide phosphodiesterase 1B from Bos taurus (Bovine).